The sequence spans 144 residues: Bacilliredoxin BC_2157 (144 aa).

It belongs to the bacilliredoxin family.

In Bacillus cereus (strain ATCC 14579 / DSM 31 / CCUG 7414 / JCM 2152 / NBRC 15305 / NCIMB 9373 / NCTC 2599 / NRRL B-3711), this protein is Bacilliredoxin BC_2157.